The chain runs to 135 residues: Small ribosomal subunit protein eS6 (135 aa).

It belongs to the eukaryotic ribosomal protein eS6 family.

This chain is Small ribosomal subunit protein eS6, found in Methanococcoides burtonii (strain DSM 6242 / NBRC 107633 / OCM 468 / ACE-M).